The chain runs to 253 residues: Claudin domain-containing protein 1 (253 aa).

The helical transmembrane segment at 5–25 (FATAFVIACVLSLISTIYMAA) threads the bilayer. Asn42 and Asn72 each carry an N-linked (GlcNAc...) asparagine glycan. 3 helical membrane-spanning segments follow: residues 141–161 (FLLPFVSLGLMCFGALIGLCA), 175–195 (ILHLLAGLCTLGSVSCYVAGI), and 216–236 (FCLACVSAPLQFMASALFIWA).

This sequence belongs to the PMP-22/EMP/MP20 family. Widely distributed in the adult CNS with highest expression in the corpus callosum, caudate nucleus, cerebral cortex, medulla, putamen, spinal cord, substantia nigra and subthalamic nucleus. Weak expression was detected in the adult heart.

The protein localises to the cell junction. It localises to the tight junction. It is found in the cell membrane. Functionally, plays a role in negatively regulating the permeability of cells to small molecules. The chain is Claudin domain-containing protein 1 (CLDND1) from Homo sapiens (Human).